Consider the following 74-residue polypeptide: Small ribosomal subunit protein bS18 (74 aa).

Belongs to the bacterial ribosomal protein bS18 family. Part of the 30S ribosomal subunit. Forms a tight heterodimer with protein bS6.

Binds as a heterodimer with protein bS6 to the central domain of the 16S rRNA, where it helps stabilize the platform of the 30S subunit. The chain is Small ribosomal subunit protein bS18 from Sphingopyxis alaskensis (strain DSM 13593 / LMG 18877 / RB2256) (Sphingomonas alaskensis).